The primary structure comprises 456 residues: Hydroxymethylglutaryl-CoA synthase ERG13 (456 aa).

Ala35 contacts (3S)-3-hydroxy-3-methylglutaryl-CoA. Glu86 functions as the Proton donor/acceptor in the catalytic mechanism. (3S)-3-hydroxy-3-methylglutaryl-CoA contacts are provided by Cys118, Asn156, Thr160, Ser210, His259, Lys268, Asn336, and Ser370. Catalysis depends on Cys118, which acts as the Acyl-thioester intermediate. His259 functions as the Proton donor/acceptor in the catalytic mechanism.

The protein belongs to the thiolase-like superfamily. HMG-CoA synthase family.

It catalyses the reaction acetoacetyl-CoA + acetyl-CoA + H2O = (3S)-3-hydroxy-3-methylglutaryl-CoA + CoA + H(+). It participates in metabolic intermediate biosynthesis; (R)-mevalonate biosynthesis; (R)-mevalonate from acetyl-CoA: step 2/3. Functionally, hydroxymethylglutaryl-CoA synthase; part of the first module of ergosterol biosynthesis pathway that includes the early steps of the pathway, conserved across all eukaryotes, and which results in the formation of mevalonate from acetyl-coenzyme A (acetyl-CoA). ERG13 condenses acetyl-CoA with acetoacetyl-CoA to form hydroxymethylglutaryl-CoA (HMG-CoA). The first module starts with the action of the cytosolic acetyl-CoA acetyltransferase ERG10B that catalyzes the formation of acetoacetyl-CoA. The hydroxymethylglutaryl-CoA synthases ERG13 then condenses acetyl-CoA with acetoacetyl-CoA to form HMG-CoA. The rate-limiting step of the early module is the reduction to mevalonate by the 3-hydroxy-3-methylglutaryl-coenzyme A (HMG-CoA) reductases HMG1. The polypeptide is Hydroxymethylglutaryl-CoA synthase ERG13 (Gibberella zeae (strain ATCC MYA-4620 / CBS 123657 / FGSC 9075 / NRRL 31084 / PH-1) (Wheat head blight fungus)).